The following is a 254-amino-acid chain: Small ribosomal subunit protein uS2 (254 aa).

Basic and acidic residues predominate over residues 228 to 248 (RKERKGQDAEEELKKASEPKA). The interval 228 to 254 (RKERKGQDAEEELKKASEPKAAEAAAE) is disordered.

It belongs to the universal ribosomal protein uS2 family.

This is Small ribosomal subunit protein uS2 from Nitratidesulfovibrio vulgaris (strain ATCC 29579 / DSM 644 / CCUG 34227 / NCIMB 8303 / VKM B-1760 / Hildenborough) (Desulfovibrio vulgaris).